Here is a 256-residue protein sequence, read N- to C-terminus: Thiazole synthase (256 aa).

Residue K96 is the Schiff-base intermediate with DXP of the active site. Residues G157, 184–185, and 206–207 contribute to the 1-deoxy-D-xylulose 5-phosphate site; these read AG and NT.

The protein belongs to the ThiG family. In terms of assembly, homotetramer. Forms heterodimers with either ThiH or ThiS.

The protein resides in the cytoplasm. The enzyme catalyses [ThiS sulfur-carrier protein]-C-terminal-Gly-aminoethanethioate + 2-iminoacetate + 1-deoxy-D-xylulose 5-phosphate = [ThiS sulfur-carrier protein]-C-terminal Gly-Gly + 2-[(2R,5Z)-2-carboxy-4-methylthiazol-5(2H)-ylidene]ethyl phosphate + 2 H2O + H(+). It functions in the pathway cofactor biosynthesis; thiamine diphosphate biosynthesis. In terms of biological role, catalyzes the rearrangement of 1-deoxy-D-xylulose 5-phosphate (DXP) to produce the thiazole phosphate moiety of thiamine. Sulfur is provided by the thiocarboxylate moiety of the carrier protein ThiS. In vitro, sulfur can be provided by H(2)S. This chain is Thiazole synthase, found in Brucella anthropi (strain ATCC 49188 / DSM 6882 / CCUG 24695 / JCM 21032 / LMG 3331 / NBRC 15819 / NCTC 12168 / Alc 37) (Ochrobactrum anthropi).